The chain runs to 87 residues: Acylphosphatase (87 aa).

Positions R2–Y87 constitute an Acylphosphatase-like domain. Catalysis depends on residues R17 and N35.

It belongs to the acylphosphatase family.

It carries out the reaction an acyl phosphate + H2O = a carboxylate + phosphate + H(+). The polypeptide is Acylphosphatase (acyP) (Deinococcus geothermalis (strain DSM 11300 / CIP 105573 / AG-3a)).